A 177-amino-acid polypeptide reads, in one-letter code: Large ribosomal subunit protein uL5 (177 aa).

It belongs to the universal ribosomal protein uL5 family. Part of the 50S ribosomal subunit; part of the 5S rRNA/L5/L18/L25 subcomplex. Contacts the 5S rRNA and the P site tRNA. Forms a bridge to the 30S subunit in the 70S ribosome.

This is one of the proteins that bind and probably mediate the attachment of the 5S RNA into the large ribosomal subunit, where it forms part of the central protuberance. In the 70S ribosome it contacts protein S13 of the 30S subunit (bridge B1b), connecting the 2 subunits; this bridge is implicated in subunit movement. Contacts the P site tRNA; the 5S rRNA and some of its associated proteins might help stabilize positioning of ribosome-bound tRNAs. This is Large ribosomal subunit protein uL5 from Wolbachia pipientis wMel.